Consider the following 242-residue polypeptide: Cell division protein FtsQ (242 aa).

Residues 1–12 are Cytoplasmic-facing; that stretch reads MWDNAEAMERLT. Residues 13-32 form a helical membrane-spanning segment; the sequence is RWLLVMMAMLLAASGLVWFY. Topologically, residues 33–242 are periplasmic; that stretch reads NSNHLPVKQV…DGLPEKESEE (210 aa). The region spanning 37–106 is the POTRA domain; it reads LPVKQVSLKG…DTVEVVLTER (70 aa).

Belongs to the FtsQ/DivIB family. FtsQ subfamily. Part of a complex composed of FtsB, FtsL and FtsQ.

The protein resides in the cell inner membrane. Functionally, essential cell division protein. May link together the upstream cell division proteins, which are predominantly cytoplasmic, with the downstream cell division proteins, which are predominantly periplasmic. May control correct divisome assembly. This Neisseria gonorrhoeae (strain ATCC 700825 / FA 1090) protein is Cell division protein FtsQ.